The chain runs to 483 residues: Regulatory protein ViaA (483 aa).

The protein belongs to the ViaA family. Homodimer. Interacts with RavA.

It is found in the cytoplasm. In terms of biological role, component of the RavA-ViaA chaperone complex, which may act on the membrane to optimize the function of some of the respiratory chains. ViaA stimulates the ATPase activity of RavA. This is Regulatory protein ViaA from Salmonella arizonae (strain ATCC BAA-731 / CDC346-86 / RSK2980).